The primary structure comprises 182 residues: uncharacterized protein (182 aa).

It localises to the mitochondrion. This is an uncharacterized protein from Schizosaccharomyces pombe (strain 972 / ATCC 24843) (Fission yeast).